The primary structure comprises 207 residues: MGMLEVRELLCERDERTLFSGLSFTLNAGEWVQITGSNGAGKTTLLRLLTGLSRPDAGEVLWQGQPLHQVRDSYHQNLLWIGHQPGIKTRLTALENLHFYHRDGDTAQCLEALAQAGLAGFEDIPVNQLSAGQQRRVALARLWLTRATLWILDEPFTAIDVNGVDRLTQRMAQHTEQGGIVILTTHQPLNVAESKIRRISLTQTRAV.

Residues 4-207 (LEVRELLCER…RISLTQTRAV (204 aa)) enclose the ABC transporter domain. An ATP-binding site is contributed by 36–43 (GSNGAGKT).

It belongs to the ABC transporter superfamily. CcmA exporter (TC 3.A.1.107) family. In terms of assembly, the complex is composed of two ATP-binding proteins (CcmA) and two transmembrane proteins (CcmB).

The protein localises to the cell inner membrane. The catalysed reaction is heme b(in) + ATP + H2O = heme b(out) + ADP + phosphate + H(+). In terms of biological role, part of the ABC transporter complex CcmAB involved in the biogenesis of c-type cytochromes; once thought to export heme, this seems not to be the case, but its exact role is uncertain. Responsible for energy coupling to the transport system. This chain is Cytochrome c biogenesis ATP-binding export protein CcmA, found in Escherichia coli O157:H7.